Here is a 735-residue protein sequence, read N- to C-terminus: DNA replication licensing factor mcm5-A (735 aa).

Positions 332–538 (IYETVAKSIA…RDMTLAKHVM (207 aa)) constitute an MCM domain. R372 is an ADP binding site. An Arginine finger motif is present at residues 513–516 (SRFD).

This sequence belongs to the MCM family. In terms of assembly, component of the mcm2-7 complex (RLF-M). The complex forms a toroidal hexameric ring with the proposed subunit order mcm2-mcm6-mcm4-mcm7-mcm3-mcm5. The heterodimer of mmcm3/mcm5 interacts with mcm4, mmcm6, mcm7 and weakly with mcm2. Component of the CMG helicase complex, composed of the mcm2-7 complex, the GINS complex and cdc45.

The protein localises to the nucleus. It is found in the chromosome. It catalyses the reaction ATP + H2O = ADP + phosphate + H(+). Functionally, acts as a component of the MCM2-7 complex (MCM complex) which is the replicative helicase essential for 'once per cell cycle' DNA replication initiation and elongation in eukaryotic cells. Core component of CDC45-MCM-GINS (CMG) helicase, the molecular machine that unwinds template DNA during replication, and around which the replisome is built. The active ATPase sites in the MCM2-7 ring are formed through the interaction surfaces of two neighboring subunits such that a critical structure of a conserved arginine finger motif is provided in trans relative to the ATP-binding site of the Walker A box of the adjacent subunit. The six ATPase active sites, however, are likely to contribute differentially to the complex helicase activity. This chain is DNA replication licensing factor mcm5-A (mcm5-a), found in Xenopus laevis (African clawed frog).